The following is a 311-amino-acid chain: MKVAVLGAAGGIGQALALLLKTQLPAGSQLSLYDIAPVTPGVAVDLSHIPTAVEIKGFAGEDPTPALVGADVVLISAGVARKPGMDRSDLFNINAGIVRNLIEKVAVTCPKALVGIITNPVNTTVAIAAEVLKKAGVYDKNRLFGVTTLDVIRSETFIAELKGLNVADVKVNVIGGHSGVTILPLLSQVEGVTFSDEEVASLTKRIQNAGTEVVEAKAGGGSATLSMGQAACRFGMSLVRGLQGEANIVECAYVDGGSEHAEFFAQPVLLGKNGIEKVLPYGEVSAFEANARDSMLDTLKGDIKLGVDFVK.

NAD(+) is bound by residues 7-13 and D34; that span reads GAAGGIG. Substrate contacts are provided by R81 and R87. Residues N94 and 117-119 contribute to the NAD(+) site; that span reads ITN. Substrate-binding residues include N119 and R153. H177 acts as the Proton acceptor in catalysis. NAD(+) is bound at residue M227.

This sequence belongs to the LDH/MDH superfamily. MDH type 1 family. In terms of assembly, homodimer.

The catalysed reaction is (S)-malate + NAD(+) = oxaloacetate + NADH + H(+). Its function is as follows. Catalyzes the reversible oxidation of malate to oxaloacetate. The polypeptide is Malate dehydrogenase (Shewanella sp. (strain MR-4)).